Reading from the N-terminus, the 328-residue chain is L-serine dehydratase/L-threonine deaminase (328 aa).

N6-(pyridoxal phosphate)lysine is present on Lys41. Pro128 contacts pyridoxal 5'-phosphate.

Belongs to the serine/threonine dehydratase family. As to quaternary structure, homodimer. Pyridoxal 5'-phosphate serves as cofactor. Predominantly expressed in the perivenous regions of the liver.

The protein localises to the cytoplasm. The catalysed reaction is L-serine = pyruvate + NH4(+). The enzyme catalyses L-threonine = 2-oxobutanoate + NH4(+). It functions in the pathway carbohydrate biosynthesis; gluconeogenesis. Functionally, catalyzes the pyridoxal-phosphate-dependent dehydrative deamination of L-threonine and L-serine to ammonia and alpha-ketobutyrate and pyruvate, respectively. The protein is L-serine dehydratase/L-threonine deaminase (SDS) of Homo sapiens (Human).